The primary structure comprises 100 residues: UPF0213 protein YhbQ (100 aa).

In terms of domain architecture, GIY-YIG spans 2 to 77; that stretch reads TPWFLYLIRT…KQLTKRQKER (76 aa).

Belongs to the UPF0213 family.

The polypeptide is UPF0213 protein YhbQ (Escherichia coli O139:H28 (strain E24377A / ETEC)).